A 450-amino-acid polypeptide reads, in one-letter code: Tubulin alpha-3 chain (450 aa).

Residues Gln-11, Glu-71, Gly-144, Thr-145, Thr-179, Asn-206, and Asn-228 each contribute to the GTP site. Glu-71 serves as a coordination point for Mg(2+). Glu-254 is a catalytic residue.

This sequence belongs to the tubulin family. As to quaternary structure, dimer of alpha and beta chains. A typical microtubule is a hollow water-filled tube with an outer diameter of 25 nm and an inner diameter of 15 nM. Alpha-beta heterodimers associate head-to-tail to form protofilaments running lengthwise along the microtubule wall with the beta-tubulin subunit facing the microtubule plus end conferring a structural polarity. Microtubules usually have 13 protofilaments but different protofilament numbers can be found in some organisms and specialized cells. The cofactor is Mg(2+). In terms of processing, undergoes a tyrosination/detyrosination cycle, the cyclic removal and re-addition of a C-terminal tyrosine residue by the enzymes tubulin tyrosine carboxypeptidase (TTCP) and tubulin tyrosine ligase (TTL), respectively.

The protein resides in the cytoplasm. Its subcellular location is the cytoskeleton. The enzyme catalyses GTP + H2O = GDP + phosphate + H(+). In terms of biological role, tubulin is the major constituent of microtubules, a cylinder consisting of laterally associated linear protofilaments composed of alpha- and beta-tubulin heterodimers. Microtubules grow by the addition of GTP-tubulin dimers to the microtubule end, where a stabilizing cap forms. Below the cap, tubulin dimers are in GDP-bound state, owing to GTPase activity of alpha-tubulin. This chain is Tubulin alpha-3 chain (TUBA3), found in Eleusine indica (Goosegrass).